A 388-amino-acid polypeptide reads, in one-letter code: G2/mitotic-specific cyclin-B2 (388 aa).

A disordered region spans residues 46 to 67 (ATNGKVGPSKKPSKASCVQKPK).

This sequence belongs to the cyclin family. Cyclin AB subfamily. Interacts with the CDK1 protein kinase to form a serine/threonine kinase holoenzyme complex also known as maturation promoting factor (MPF). The cyclin subunit imparts substrate specificity to the complex.

Functionally, essential for the control of the cell cycle at the G2/M (mitosis) transition. This is G2/mitotic-specific cyclin-B2 (ccnb2) from Oryzias curvinotus (Hynann ricefish).